A 209-amino-acid chain; its full sequence is V-type ATP synthase subunit D 2 (209 aa).

The protein belongs to the V-ATPase D subunit family.

Functionally, produces ATP from ADP in the presence of a proton gradient across the membrane. The chain is V-type ATP synthase subunit D 2 (atpD2) from Treponema pallidum (strain Nichols).